A 407-amino-acid polypeptide reads, in one-letter code: Protein-glutamine gamma-glutamyltransferase (407 aa).

A signal peptide spans 1-31 (MRIRRRALVFATMSAVLCTAGFMPSAGEAAA). Residues 32–76 (DNGAGEETKSYAETYRLTADDVANINALNESAPAASSAGPSFRAP) constitute a propeptide that is removed on maturation. A compositionally biased stretch (low complexity) spans 62–72 (SAPAASSAGPS). Positions 62–98 (SAPAASSAGPSFRAPDSDDRVTPPAEPLDRMPDPYRP) are disordered. The segment covering 76-94 (PDSDDRVTPPAEPLDRMPD) has biased composition (basic and acidic residues). Cys-140 is a catalytic residue. The disordered stretch occupies residues 282-322 (QDRSSSADKRKYGDPDAFRPAPGTGLVDMSRDRNIPRSPTS). Over residues 286-298 (SSADKRKYGDPDA) the composition is skewed to basic and acidic residues. Active-site residues include Asp-331 and His-350.

It belongs to the bacterial TGase family.

The enzyme catalyses L-glutaminyl-[protein] + L-lysyl-[protein] = [protein]-L-lysyl-N(6)-5-L-glutamyl-[protein] + NH4(+). Catalyzes the cross-linking of proteins and the conjugation of polyamines to proteins. The protein is Protein-glutamine gamma-glutamyltransferase of Streptomyces mobaraensis (Streptoverticillium mobaraense).